The primary structure comprises 250 residues: Ribosomal RNA small subunit methyltransferase J (250 aa).

S-adenosyl-L-methionine is bound by residues 101 to 102 (RD), 117 to 118 (ER), 153 to 154 (SS), and Asp171.

The protein belongs to the methyltransferase superfamily. RsmJ family.

Its subcellular location is the cytoplasm. The enzyme catalyses guanosine(1516) in 16S rRNA + S-adenosyl-L-methionine = N(2)-methylguanosine(1516) in 16S rRNA + S-adenosyl-L-homocysteine + H(+). Its function is as follows. Specifically methylates the guanosine in position 1516 of 16S rRNA. This chain is Ribosomal RNA small subunit methyltransferase J, found in Escherichia fergusonii (strain ATCC 35469 / DSM 13698 / CCUG 18766 / IAM 14443 / JCM 21226 / LMG 7866 / NBRC 102419 / NCTC 12128 / CDC 0568-73).